The sequence spans 245 residues: Ninjurin-A (245 aa).

Residues 1–170 (MSNLEHITLE…TSSQHPYFYP (170 aa)) lie on the Extracellular side of the membrane. N-linked (GlcNAc...) asparagine glycans are attached at residues asparagine 19 and asparagine 28. The interval 32-101 (HSYGGAIDGR…NVNVNVPNGG (70 aa)) is disordered. The span at 92 to 101 (NVNVNVPNGG) shows a compositional bias: low complexity. The tract at residues 135–146 (KKTLAQGMMDLA) is helix alpha1. Residues 149 to 165 (SANANQLRYVLETSSQH) form a helix alpha2 region. The helical transmembrane segment at 171–191 (SLLFISLSIIFQIAVGVGLIL) threads the bilayer. At 192–211 (NGQYNIKNGHDICRANRINN) the chain is on the cytoplasmic side. A helical transmembrane segment spans residues 212–232 (YTVSGIFIVTVVNVLISAFTV). The Extracellular portion of the chain corresponds to 233–245 (DRDTVPALPANTT).

The protein belongs to the ninjurin family. Homooligomer. In terms of processing, cleaved by Mmp1 protease to generate the Secreted ninjurin-A form.

Its subcellular location is the cell membrane. It localises to the secreted. In terms of biological role, effector of non-apoptotic necrotic cell death that mediates plasma membrane rupture (cytolysis): oligomerizes in response to death stimuli and promotes plasma membrane rupture by introducing hydrophilic faces of 2 alpha helices into the hydrophobic membrane, leading to release intracellular molecules that propagate the inflammatory response. Also acts as a homophilic transmembrane adhesion molecule that promotes cell adhesion by mediating homophilic interactions via its extracellular region. Its function is as follows. Secreted form generated by cleavage, which acts as a negative regulator of cell adhesion. Promotes the loss of cell adhesion in a cell non-autonomous manner. The protein is Ninjurin-A of Drosophila melanogaster (Fruit fly).